Reading from the N-terminus, the 325-residue chain is Tetraacyldisaccharide 4'-kinase (325 aa).

53-60 (SVGGNGKT) provides a ligand contact to ATP.

It belongs to the LpxK family.

The catalysed reaction is a lipid A disaccharide + ATP = a lipid IVA + ADP + H(+). Its pathway is glycolipid biosynthesis; lipid IV(A) biosynthesis; lipid IV(A) from (3R)-3-hydroxytetradecanoyl-[acyl-carrier-protein] and UDP-N-acetyl-alpha-D-glucosamine: step 6/6. In terms of biological role, transfers the gamma-phosphate of ATP to the 4'-position of a tetraacyldisaccharide 1-phosphate intermediate (termed DS-1-P) to form tetraacyldisaccharide 1,4'-bis-phosphate (lipid IVA). In Pasteurella multocida (strain Pm70), this protein is Tetraacyldisaccharide 4'-kinase.